Here is a 604-residue protein sequence, read N- to C-terminus: Numb-like protein (604 aa).

Disordered regions lie at residues 1-68 (MSRS…QWQA), 223-283 (GSFR…PVAA), 372-457 (ASAG…TLQP), and 531-604 (KAGA…EIEL). Positions 74 to 225 (RKGTCSFPVR…RTSFAREGSF (152 aa)) constitute a PID domain. Ser-224 and Ser-228 each carry phosphoserine. Positions 233–245 (PAEREAGDKKKAE) are enriched in basic and acidic residues. Low complexity predominate over residues 246-260 (AAAAPAVAPGPAQPG). At Ser-263 the chain carries Phosphoserine. A Phosphothreonine modification is found at Thr-279. A compositionally biased stretch (basic and acidic residues) spans 409-418 (TPSEAERWLE). Residue Ser-411 is modified to Phosphoserine. Composition is skewed to low complexity over residues 427-441 (QQQQ…QQQQ) and 542-552 (SAPGGQARPRP). The span at 553-568 (NGAPWPPEPAPAPAPE) shows a compositional bias: pro residues.

As to quaternary structure, interacts (via PTB domain) with MAP3K7IP2 (via C-terminal). Interacts (via C-terminal) with TRAF6 (via TRAF domains). Associates with EPS15 and NOTCH1. As to expression, preferentially expressed in the nervous system. In the developing neocortex, expressed in postmitotic neurons in the cortical plate but not in progenitors within the ventricular zone.

It localises to the cytoplasm. Plays a role in the process of neurogenesis. Required throughout embryonic neurogenesis to maintain neural progenitor cells, also called radial glial cells (RGCs), by allowing their daughter cells to choose progenitor over neuronal cell fate. Not required for the proliferation of neural progenitor cells before the onset of embryonic neurogenesis. Also required postnatally in the subventricular zone (SVZ) neurogenesis by regulating SVZ neuroblasts survival and ependymal wall integrity. Negative regulator of NF-kappa-B signaling pathway. The inhibition of NF-kappa-B activation is mediated at least in part, by preventing MAP3K7IP2 to interact with polyubiquitin chains of TRAF6 and RIPK1 and by stimulating the 'Lys-48'-linked polyubiquitination and degradation of TRAF6 in cortical neurons. The polypeptide is Numb-like protein (Numbl) (Mus musculus (Mouse)).